The following is a 287-amino-acid chain: Protease HtpX (287 aa).

A run of 2 helical transmembrane segments spans residues 4–24 and 33–53; these read IFLL…VMSI and GGLL…SLAI. Residue His-139 participates in Zn(2+) binding. Glu-140 is an active-site residue. His-143 contacts Zn(2+). Helical transmembrane passes span 154-174 and 195-215; these read LIQG…AGII and AVVF…VAYF. Glu-220 contributes to the Zn(2+) binding site.

The protein belongs to the peptidase M48B family. The cofactor is Zn(2+).

It is found in the cell inner membrane. The sequence is that of Protease HtpX from Shewanella pealeana (strain ATCC 700345 / ANG-SQ1).